Consider the following 342-residue polypeptide: Putative glycosyltransferases (342 aa).

2 helical membrane-spanning segments follow: residues 227–247 (IFYL…YLII) and 262–282 (VIVS…LVGI).

The protein belongs to the glycosyltransferase 2 family.

Its subcellular location is the cell membrane. In terms of biological role, may play only a redundant role in maintaining cell wall viability and bacterial virulence. In Mycobacterium tuberculosis (strain CDC 1551 / Oshkosh), this protein is Putative glycosyltransferases (pimF).